Reading from the N-terminus, the 650-residue chain is Protein KINESIN LIGHT CHAIN-RELATED 3 (650 aa).

The disordered stretch occupies residues 104–141; that stretch reads EKQTGKKNVTKSNVGVGGMRKKKVGGTKLQNGNEEPSS. Positions 131 to 141 are enriched in polar residues; sequence KLQNGNEEPSS. TPR repeat units lie at residues 192-225, 235-268, 277-310, 319-353, 359-392, 401-434, 444-477, 485-518, 527-560, and 569-602; these read IMCL…PVVE, FAGL…QKKV, GETC…HRES, AADR…AANG, AFVD…LKTA, GSVY…YESH, ASGL…YADS, AGIE…LRAT, GIAL…LEQE, and LGLY…REEK.

The protein belongs to the kinesin light chain family.

This chain is Protein KINESIN LIGHT CHAIN-RELATED 3, found in Arabidopsis thaliana (Mouse-ear cress).